A 299-amino-acid chain; its full sequence is Protoheme IX farnesyltransferase (299 aa).

A run of 9 helical transmembrane segments spans residues 27–47 (VVALMLLTSVVGMSLAPHEHF), 53–73 (LIALVGIALMAGSAAAFNHLI), 97–117 (FNVLLFALLIGSLGFLSLMLW), 121–141 (LTAYLTFASLLGYAAVYTLYL), 149–169 (IVIAGIAGAMPPLLGWTSITG), 175–195 (AWVLVMIIFIWTPPHFWALAI), 222–242 (ILLYAILLALVCMLPVLVGMA), 244–264 (YLYLFSALVLNVCFVRYAIKL), and 273–293 (AIEMFRFSIYFLLLLFCALLL).

It belongs to the UbiA prenyltransferase family. Protoheme IX farnesyltransferase subfamily.

It localises to the cell inner membrane. The enzyme catalyses heme b + (2E,6E)-farnesyl diphosphate + H2O = Fe(II)-heme o + diphosphate. It functions in the pathway porphyrin-containing compound metabolism; heme O biosynthesis; heme O from protoheme: step 1/1. Converts heme B (protoheme IX) to heme O by substitution of the vinyl group on carbon 2 of heme B porphyrin ring with a hydroxyethyl farnesyl side group. The chain is Protoheme IX farnesyltransferase from Vibrio vulnificus (strain CMCP6).